The chain runs to 214 residues: N-(5'-phosphoribosyl)anthranilate isomerase (214 aa).

Belongs to the TrpF family.

It carries out the reaction N-(5-phospho-beta-D-ribosyl)anthranilate = 1-(2-carboxyphenylamino)-1-deoxy-D-ribulose 5-phosphate. Its pathway is amino-acid biosynthesis; L-tryptophan biosynthesis; L-tryptophan from chorismate: step 3/5. This Halorubrum lacusprofundi (strain ATCC 49239 / DSM 5036 / JCM 8891 / ACAM 34) protein is N-(5'-phosphoribosyl)anthranilate isomerase.